The chain runs to 323 residues: V-type ATP synthase subunit C (323 aa).

Belongs to the V-ATPase V0D/AC39 subunit family.

Functionally, produces ATP from ADP in the presence of a proton gradient across the membrane. The chain is V-type ATP synthase subunit C from Thermus thermophilus (strain ATCC BAA-163 / DSM 7039 / HB27).